The primary structure comprises 120 residues: Ribosome-binding factor A (120 aa).

Belongs to the RbfA family. In terms of assembly, monomer. Binds 30S ribosomal subunits, but not 50S ribosomal subunits or 70S ribosomes.

The protein resides in the cytoplasm. Its function is as follows. One of several proteins that assist in the late maturation steps of the functional core of the 30S ribosomal subunit. Associates with free 30S ribosomal subunits (but not with 30S subunits that are part of 70S ribosomes or polysomes). Required for efficient processing of 16S rRNA. May interact with the 5'-terminal helix region of 16S rRNA. The polypeptide is Ribosome-binding factor A (Clostridium botulinum (strain 657 / Type Ba4)).